Here is a 1032-residue protein sequence, read N- to C-terminus: Putative oxidoreductase YgfK (1032 aa).

The region spanning 928-958 is the 4Fe-4S ferredoxin-type domain; sequence RFQTLHLDAYCNECGNCAQFCPWNGKPYKDK. The [4Fe-4S] cluster site is built by C938, C941, C944, and C948.

It depends on [4Fe-4S] cluster as a cofactor.

Could be an iron-sulfur flavoprotein with NADPH:O(2) oxidoreductase activity. This chain is Putative oxidoreductase YgfK (ygfK), found in Escherichia coli O157:H7.